Reading from the N-terminus, the 133-residue chain is MDPRLYRLIRFPSNGLGNNNNDPNQQRGERPRQPHPDLGWILDAPNEPPRNRNPLLYLVTAPPRPRKKRSFMTTSKPFRIQTNVSDLQYNAWQAIQDAPPEKRCEYYVKYMDEHMNSQNYPNGVGLPHRWGQF.

The segment at 11 to 57 (FPSNGLGNNNNDPNQQRGERPRQPHPDLGWILDAPNEPPRNRNPLLY) is disordered. The segment covering 14 to 24 (NGLGNNNNDPN) has biased composition (low complexity). An N-linked (GlcNAc...) asparagine glycan is attached at Asn-83.

The protein belongs to the male-specific scotti family.

Its function is as follows. Post-meiotically transcribed gene that has a role in late spermiogenesis; required for actin cone progression during spermatid individualization. The protein is Male-specific protein scotti of Drosophila persimilis (Fruit fly).